Reading from the N-terminus, the 547-residue chain is Chaperonin GroEL (547 aa).

Residues 30–33, Lys-51, 87–91, Gly-415, 479–481, and Asp-495 contribute to the ATP site; these read TLGP, DGTTT, and NAA.

It belongs to the chaperonin (HSP60) family. Forms a cylinder of 14 subunits composed of two heptameric rings stacked back-to-back. Interacts with the co-chaperonin GroES.

It localises to the cytoplasm. The enzyme catalyses ATP + H2O + a folded polypeptide = ADP + phosphate + an unfolded polypeptide.. In terms of biological role, together with its co-chaperonin GroES, plays an essential role in assisting protein folding. The GroEL-GroES system forms a nano-cage that allows encapsulation of the non-native substrate proteins and provides a physical environment optimized to promote and accelerate protein folding. The chain is Chaperonin GroEL from Cupriavidus pinatubonensis (strain JMP 134 / LMG 1197) (Cupriavidus necator (strain JMP 134)).